A 182-amino-acid polypeptide reads, in one-letter code: Large ribosomal subunit protein uL16 (182 aa).

It belongs to the universal ribosomal protein uL16 family.

The polypeptide is Large ribosomal subunit protein uL16 (Thermococcus gammatolerans (strain DSM 15229 / JCM 11827 / EJ3)).